The following is a 343-amino-acid chain: Protein RecA (343 aa).

65-72 (GPESSGKT) is a binding site for ATP.

The protein belongs to the RecA family.

It is found in the cytoplasm. Its function is as follows. Can catalyze the hydrolysis of ATP in the presence of single-stranded DNA, the ATP-dependent uptake of single-stranded DNA by duplex DNA, and the ATP-dependent hybridization of homologous single-stranded DNAs. It interacts with LexA causing its activation and leading to its autocatalytic cleavage. This is Protein RecA from Campylobacter jejuni subsp. jejuni serotype O:6 (strain 81116 / NCTC 11828).